The chain runs to 1070 residues: DNA-directed RNA polymerase subunit beta (1070 aa).

The protein belongs to the RNA polymerase beta chain family. As to quaternary structure, in plastids the minimal PEP RNA polymerase catalytic core is composed of four subunits: alpha, beta, beta', and beta''. When a (nuclear-encoded) sigma factor is associated with the core the holoenzyme is formed, which can initiate transcription.

It localises to the plastid. The protein resides in the chloroplast. It catalyses the reaction RNA(n) + a ribonucleoside 5'-triphosphate = RNA(n+1) + diphosphate. In terms of biological role, DNA-dependent RNA polymerase catalyzes the transcription of DNA into RNA using the four ribonucleoside triphosphates as substrates. This is DNA-directed RNA polymerase subunit beta from Gossypium hirsutum (Upland cotton).